The chain runs to 426 residues: uncharacterized protein (426 aa).

The protein belongs to the serpin family.

This is an uncharacterized protein from Methanosarcina acetivorans (strain ATCC 35395 / DSM 2834 / JCM 12185 / C2A).